The following is a 1056-amino-acid chain: Carbamoyl phosphate synthase large chain (1056 aa).

Residues 1-397 are carboxyphosphate synthetic domain; it reads MPRRTDIKKV…GFKKALRSID (397 aa). Residues Arg-127, Arg-167, Gly-173, Gly-174, Glu-206, Val-208, Glu-213, Gly-239, Val-240, His-241, Gln-282, and Glu-294 each contribute to the ATP site. Residues 131 to 323 enclose the ATP-grasp 1 domain; that stretch reads KALMQKIGEP…IARVAAKIAI (193 aa). The Mg(2+) site is built by Gln-282, Glu-294, and Asn-296. Positions 282, 294, and 296 each coordinate Mn(2+). The tract at residues 398-530 is oligomerization domain; that stretch reads TDINTHTNHN…YSTHGVTTDI (133 aa). The carbamoyl phosphate synthetic domain stretch occupies residues 531–919; sequence IQNDKKKVLI…YKACISADNE (389 aa). The ATP-grasp 2 domain maps to 661-852; sequence SELLDALKIP…LAKVAAKVMI (192 aa). The ATP site is built by Arg-697, Ser-736, Leu-738, Glu-743, Gly-768, Val-769, His-770, Ser-771, Gln-811, and Glu-823. Residues Gln-811, Glu-823, and Asn-825 each coordinate Mg(2+). 3 residues coordinate Mn(2+): Gln-811, Glu-823, and Asn-825. Positions 918–1056 constitute an MGS-like domain; sequence NELPIEGNVF…PISHYLSEVE (139 aa). The interval 920-1056 is allosteric domain; the sequence is LPIEGNVFIS…PISHYLSEVE (137 aa).

Belongs to the CarB family. Composed of two chains; the small (or glutamine) chain promotes the hydrolysis of glutamine to ammonia, which is used by the large (or ammonia) chain to synthesize carbamoyl phosphate. Tetramer of heterodimers (alpha,beta)4. Requires Mg(2+) as cofactor. Mn(2+) serves as cofactor.

The enzyme catalyses hydrogencarbonate + L-glutamine + 2 ATP + H2O = carbamoyl phosphate + L-glutamate + 2 ADP + phosphate + 2 H(+). The catalysed reaction is hydrogencarbonate + NH4(+) + 2 ATP = carbamoyl phosphate + 2 ADP + phosphate + 2 H(+). It participates in amino-acid biosynthesis; L-arginine biosynthesis; carbamoyl phosphate from bicarbonate: step 1/1. The protein operates within pyrimidine metabolism; UMP biosynthesis via de novo pathway; (S)-dihydroorotate from bicarbonate: step 1/3. Functionally, large subunit of the glutamine-dependent carbamoyl phosphate synthetase (CPSase). CPSase catalyzes the formation of carbamoyl phosphate from the ammonia moiety of glutamine, carbonate, and phosphate donated by ATP, constituting the first step of 2 biosynthetic pathways, one leading to arginine and/or urea and the other to pyrimidine nucleotides. The large subunit (synthetase) binds the substrates ammonia (free or transferred from glutamine from the small subunit), hydrogencarbonate and ATP and carries out an ATP-coupled ligase reaction, activating hydrogencarbonate by forming carboxy phosphate which reacts with ammonia to form carbamoyl phosphate. The sequence is that of Carbamoyl phosphate synthase large chain from Methanosphaerula palustris (strain ATCC BAA-1556 / DSM 19958 / E1-9c).